The following is a 307-amino-acid chain: Furaquinocin biosynthesis prenyltransferase (307 aa).

It belongs to the aromatic prenyltransferase family. As to quaternary structure, monomer.

The catalysed reaction is 2-O,3-dimethylflaviolin + (2E)-geranyl diphosphate = 6-linalyl-2-O,3-dimethylflaviolin + diphosphate. It catalyses the reaction 2-O,3-dimethylflaviolin + (2E)-geranyl diphosphate + H(+) = 7-O-geranyl-2-O,3-dimethylflaviolin + diphosphate. Does not require any metal cations for activity. Its function is as follows. Involved in the biosynthesis of furaquinocin. Catalyzes the transfer of a geranyl group to 2-methoxy-3-methyl-flaviolin to yield 6-prenyl-2-methoxy-3-methyl-flaviolin and 7-O-geranyl-2-methoxy-3-methyl-flaviolin in a 10:1 ratio. Can also use other substrates such as flaviolin or 1,3-dihydroxy naphthalene, and can also use DMAPP as prenyl donor. In Streptomyces sp. (strain KO-3988), this protein is Furaquinocin biosynthesis prenyltransferase.